The primary structure comprises 412 residues: [Pyruvate dehydrogenase (acetyl-transferring)] kinase isozyme 4, mitochondrial (412 aa).

The Histidine kinase domain maps to 138–368 (IIEYKDSCTV…DAIIYLKALS (231 aa)). Residues 254–261 (ELFKNAMR), D293, 312–313 (ST), and 329–334 (GFGYGL) contribute to the ATP site.

The protein belongs to the PDK/BCKDK protein kinase family. Homodimer. Interacts with the pyruvate dehydrogenase complex subunit DLAT, and is part of the multimeric pyruvate dehydrogenase complex that contains multiple copies of pyruvate dehydrogenase (E1), dihydrolipoamide acetyltransferase (DLAT, E2) and lipoamide dehydrogenase (DLD, E3). In terms of tissue distribution, detected in heart, white adipose tissue and muscle.

It is found in the mitochondrion matrix. It carries out the reaction L-seryl-[pyruvate dehydrogenase E1 alpha subunit] + ATP = O-phospho-L-seryl-[pyruvate dehydrogenase E1 alpha subunit] + ADP + H(+). Its function is as follows. Kinase that plays a key role in regulation of glucose and fatty acid metabolism and homeostasis via phosphorylation of the pyruvate dehydrogenase subunits PDHA1 and PDHA2. This inhibits pyruvate dehydrogenase activity, and thereby regulates metabolite flux through the tricarboxylic acid cycle, down-regulates aerobic respiration and inhibits the formation of acetyl-coenzyme A from pyruvate. Inhibition of pyruvate dehydrogenase decreases glucose utilization and increases fat metabolism in response to prolonged fasting and starvation. Plays an important role in maintaining normal blood glucose levels under starvation, and is involved in the insulin signaling cascade. Via its regulation of pyruvate dehydrogenase activity, plays an important role in maintaining normal blood pH and in preventing the accumulation of ketone bodies under starvation. In the fed state, mediates cellular responses to glucose levels and to a high-fat diet. Regulates both fatty acid oxidation and de novo fatty acid biosynthesis. Plays a role in the generation of reactive oxygen species. Protects detached epithelial cells against anoikis. Plays a role in cell proliferation via its role in regulating carbohydrate and fatty acid metabolism. The sequence is that of [Pyruvate dehydrogenase (acetyl-transferring)] kinase isozyme 4, mitochondrial (PDK4) from Rhinolophus ferrumequinum (Greater horseshoe bat).